Here is a 460-residue protein sequence, read N- to C-terminus: Bifunctional protein GlmU (460 aa).

Residues 1–232 (MENVAAIILA…SDEIMGVNDR (232 aa)) are pyrophosphorylase. UDP-N-acetyl-alpha-D-glucosamine-binding positions include 9–12 (LAAG), Lys-23, Gln-75, and 80–81 (GT). Residue Asp-105 participates in Mg(2+) binding. The UDP-N-acetyl-alpha-D-glucosamine site is built by Gly-142, Glu-157, Asn-172, and Asn-230. Mg(2+) is bound at residue Asn-230. The segment at 233–253 (AQLAQAARILRRRINRDLMLS) is linker. An N-acetyltransferase region spans residues 254–460 (GVSLVDPEQT…GWRIRMKKKT (207 aa)). 2 residues coordinate UDP-N-acetyl-alpha-D-glucosamine: Arg-336 and Lys-354. His-366 serves as the catalytic Proton acceptor. Positions 369 and 380 each coordinate UDP-N-acetyl-alpha-D-glucosamine. Acetyl-CoA contacts are provided by residues 389-390 (NY), Ser-408, Ala-426, and Arg-443.

The protein in the N-terminal section; belongs to the N-acetylglucosamine-1-phosphate uridyltransferase family. In the C-terminal section; belongs to the transferase hexapeptide repeat family. As to quaternary structure, homotrimer. It depends on Mg(2+) as a cofactor.

The protein localises to the cytoplasm. It carries out the reaction alpha-D-glucosamine 1-phosphate + acetyl-CoA = N-acetyl-alpha-D-glucosamine 1-phosphate + CoA + H(+). The enzyme catalyses N-acetyl-alpha-D-glucosamine 1-phosphate + UTP + H(+) = UDP-N-acetyl-alpha-D-glucosamine + diphosphate. Its pathway is nucleotide-sugar biosynthesis; UDP-N-acetyl-alpha-D-glucosamine biosynthesis; N-acetyl-alpha-D-glucosamine 1-phosphate from alpha-D-glucosamine 6-phosphate (route II): step 2/2. It participates in nucleotide-sugar biosynthesis; UDP-N-acetyl-alpha-D-glucosamine biosynthesis; UDP-N-acetyl-alpha-D-glucosamine from N-acetyl-alpha-D-glucosamine 1-phosphate: step 1/1. The protein operates within bacterial outer membrane biogenesis; LPS lipid A biosynthesis. Functionally, catalyzes the last two sequential reactions in the de novo biosynthetic pathway for UDP-N-acetylglucosamine (UDP-GlcNAc). The C-terminal domain catalyzes the transfer of acetyl group from acetyl coenzyme A to glucosamine-1-phosphate (GlcN-1-P) to produce N-acetylglucosamine-1-phosphate (GlcNAc-1-P), which is converted into UDP-GlcNAc by the transfer of uridine 5-monophosphate (from uridine 5-triphosphate), a reaction catalyzed by the N-terminal domain. This Pelobacter propionicus (strain DSM 2379 / NBRC 103807 / OttBd1) protein is Bifunctional protein GlmU.